The primary structure comprises 259 residues: Thiazole synthase (259 aa).

The active-site Schiff-base intermediate with DXP is the lysine 98. Residues glycine 159, 185–186 (AG), and 207–208 (NS) contribute to the 1-deoxy-D-xylulose 5-phosphate site.

The protein belongs to the ThiG family. In terms of assembly, homotetramer. Forms heterodimers with either ThiH or ThiS.

The protein localises to the cytoplasm. The enzyme catalyses [ThiS sulfur-carrier protein]-C-terminal-Gly-aminoethanethioate + 2-iminoacetate + 1-deoxy-D-xylulose 5-phosphate = [ThiS sulfur-carrier protein]-C-terminal Gly-Gly + 2-[(2R,5Z)-2-carboxy-4-methylthiazol-5(2H)-ylidene]ethyl phosphate + 2 H2O + H(+). Its pathway is cofactor biosynthesis; thiamine diphosphate biosynthesis. Catalyzes the rearrangement of 1-deoxy-D-xylulose 5-phosphate (DXP) to produce the thiazole phosphate moiety of thiamine. Sulfur is provided by the thiocarboxylate moiety of the carrier protein ThiS. In vitro, sulfur can be provided by H(2)S. This chain is Thiazole synthase, found in Chlorobium phaeobacteroides (strain DSM 266 / SMG 266 / 2430).